Reading from the N-terminus, the 243-residue chain is Small ribosomal subunit protein eS4 (243 aa).

The 63-residue stretch at 43–105 (IPLLYIVRDY…TGEHYRVLPN (63 aa)) folds into the S4 RNA-binding domain.

The protein belongs to the eukaryotic ribosomal protein eS4 family.

The sequence is that of Small ribosomal subunit protein eS4 (rps4e) from Pyrococcus horikoshii (strain ATCC 700860 / DSM 12428 / JCM 9974 / NBRC 100139 / OT-3).